Reading from the N-terminus, the 210-residue chain is Na(+)-translocating NADH-quinone reductase subunit D (210 aa).

A run of 6 helical transmembrane segments spans residues 14-34 (PIVN…ALAV), 42-62 (LVMA…ISLI), 72-92 (IIVQ…LLQA), 103-123 (VFVG…AYAM), 131-151 (FMDG…VGFV), and 178-198 (NGML…IWII).

The protein belongs to the NqrDE/RnfAE family. As to quaternary structure, composed of six subunits; NqrA, NqrB, NqrC, NqrD, NqrE and NqrF.

The protein localises to the cell inner membrane. The catalysed reaction is a ubiquinone + n Na(+)(in) + NADH + H(+) = a ubiquinol + n Na(+)(out) + NAD(+). In terms of biological role, NQR complex catalyzes the reduction of ubiquinone-1 to ubiquinol by two successive reactions, coupled with the transport of Na(+) ions from the cytoplasm to the periplasm. NqrA to NqrE are probably involved in the second step, the conversion of ubisemiquinone to ubiquinol. The chain is Na(+)-translocating NADH-quinone reductase subunit D from Shewanella putrefaciens (strain CN-32 / ATCC BAA-453).